A 138-amino-acid chain; its full sequence is Lutropin subunit beta (138 aa).

An N-terminal signal peptide occupies residues 1-17 (LQGLLLWLLLSVGGVWA). Intrachain disulfides connect Cys-26–Cys-74, Cys-40–Cys-89, Cys-43–Cys-127, Cys-51–Cys-105, Cys-55–Cys-107, and Cys-110–Cys-117. An N-linked (GlcNAc...) asparagine glycan is attached at Asn-30.

It belongs to the glycoprotein hormones subunit beta family. As to quaternary structure, heterodimer of a common alpha chain and a unique beta chain which confers biological specificity to thyrotropin, lutropin, follitropin and gonadotropin.

It is found in the secreted. Functionally, promotes spermatogenesis and ovulation by stimulating the testes and ovaries to synthesize steroids. In Canis lupus familiaris (Dog), this protein is Lutropin subunit beta (LHB).